We begin with the raw amino-acid sequence, 204 residues long: Recombination protein RecR (204 aa).

A C4-type zinc finger spans residues 57-72 (CPTCFNYTDTDICRYC). The Toprim domain occupies 80-181 (ESICVVEEPS…KLSRIAHGVP (102 aa)).

Belongs to the RecR family.

In terms of biological role, may play a role in DNA repair. It seems to be involved in an RecBC-independent recombinational process of DNA repair. It may act with RecF and RecO. The chain is Recombination protein RecR from Bdellovibrio bacteriovorus (strain ATCC 15356 / DSM 50701 / NCIMB 9529 / HD100).